Consider the following 354-residue polypeptide: RNA 3'-terminal phosphate cyclase (354 aa).

ATP contacts are provided by residues Gln100 and 290 to 293 (HMGD). The active-site Tele-AMP-histidine intermediate is the His316.

The protein belongs to the RNA 3'-terminal cyclase family. Type 1 subfamily.

It localises to the cytoplasm. The catalysed reaction is a 3'-end 3'-phospho-ribonucleotide-RNA + ATP = a 3'-end 2',3'-cyclophospho-ribonucleotide-RNA + AMP + diphosphate. In terms of biological role, catalyzes the conversion of 3'-phosphate to a 2',3'-cyclic phosphodiester at the end of RNA. The mechanism of action of the enzyme occurs in 3 steps: (A) adenylation of the enzyme by ATP; (B) transfer of adenylate to an RNA-N3'P to produce RNA-N3'PP5'A; (C) and attack of the adjacent 2'-hydroxyl on the 3'-phosphorus in the diester linkage to produce the cyclic end product. The biological role of this enzyme is unknown but it is likely to function in some aspects of cellular RNA processing. The chain is RNA 3'-terminal phosphate cyclase from Caldivirga maquilingensis (strain ATCC 700844 / DSM 13496 / JCM 10307 / IC-167).